The chain runs to 603 residues: Chaperone protein DnaK (603 aa).

Thr-175 carries the phosphothreonine; by autocatalysis modification. Residues 573-586 (AQQAQQQNPDNQNN) show a composition bias toward low complexity. A disordered region spans residues 573–603 (AQQAQQQNPDNQNNNKDDVTEATVTDDSTKK). A compositionally biased stretch (polar residues) spans 594-603 (ATVTDDSTKK).

The protein belongs to the heat shock protein 70 family.

Functionally, acts as a chaperone. The polypeptide is Chaperone protein DnaK (Ureaplasma parvum serovar 3 (strain ATCC 27815 / 27 / NCTC 11736)).